A 196-amino-acid polypeptide reads, in one-letter code: Pycsar effector protein GmPycTM (196 aa).

3 helical membrane passes run 34-54 (ISFS…SGII), 82-102 (ITTI…TYLF), and 176-196 (VNWL…FLFL).

It localises to the cell inner membrane. In terms of biological role, pycsar (pyrimidine cyclase system for antiphage resistance) provides immunity against bacteriophage. The pyrimidine cyclase (PycC) synthesizes cyclic nucleotides in response to infection; these serve as specific second messenger signals. The signals activate the adjacent effector, leading to bacterial cell death and abortive phage infection. A clade C Pycsar system. Its function is as follows. The effector gene of a two-gene Pycsar system. Expression of this and adjacent uridylate cyclase GmPycC (AC P0DV42) probably confers resistance to bacteriophage. The genes are probably only expressed in response to bacteriophage infection. Probably only responds to cUMP (produced by its cognate NTP cyclase), acts by impairing membrane integrity. The chain is Pycsar effector protein GmPycTM from Gulbenkiania mobilis.